Consider the following 141-residue polypeptide: Nucleoside diphosphate kinase (141 aa).

Positions 11, 59, 87, 93, 104, and 114 each coordinate ATP. His-117 acts as the Pros-phosphohistidine intermediate in catalysis.

It belongs to the NDK family. As to quaternary structure, homotetramer. It depends on Mg(2+) as a cofactor.

The protein localises to the cytoplasm. The enzyme catalyses a 2'-deoxyribonucleoside 5'-diphosphate + ATP = a 2'-deoxyribonucleoside 5'-triphosphate + ADP. It carries out the reaction a ribonucleoside 5'-diphosphate + ATP = a ribonucleoside 5'-triphosphate + ADP. Its function is as follows. Major role in the synthesis of nucleoside triphosphates other than ATP. The ATP gamma phosphate is transferred to the NDP beta phosphate via a ping-pong mechanism, using a phosphorylated active-site intermediate. The polypeptide is Nucleoside diphosphate kinase (Janthinobacterium sp. (strain Marseille) (Minibacterium massiliensis)).